Here is a 328-residue protein sequence, read N- to C-terminus: Glucan endo-1,3-beta-glucosidase, basic isoform 3 (328 aa).

Glu85 acts as the Proton donor in catalysis. Glu230 serves as the catalytic Nucleophile. The propeptide at 306 to 328 (VSERVWDISAETNSTTSSLISEM) is removed in mature form. Asn318 carries an N-linked (GlcNAc...) asparagine glycan.

It belongs to the glycosyl hydrolase 17 family.

The protein resides in the vacuole. The enzyme catalyses Hydrolysis of (1-&gt;3)-beta-D-glucosidic linkages in (1-&gt;3)-beta-D-glucans.. Is thought to be an important plant defense-related product against fungal pathogens. In Solanum tuberosum (Potato), this protein is Glucan endo-1,3-beta-glucosidase, basic isoform 3 (GLUB3).